Reading from the N-terminus, the 394-residue chain is Elongation factor Tu (394 aa).

A tr-type G domain is found at 10-204 (KPHINIGTIG…AVDDNIPTPE (195 aa)). The segment at 19-26 (GHVDHGKT) is G1. Residue 19 to 26 (GHVDHGKT) participates in GTP binding. Thr-26 provides a ligand contact to Mg(2+). The interval 60–64 (GITIN) is G2. The tract at residues 81-84 (DCPG) is G3. Residues 81-85 (DCPGH) and 136-139 (NKID) contribute to the GTP site. Residues 136–139 (NKID) form a G4 region. The G5 stretch occupies residues 174–176 (SAL).

Belongs to the TRAFAC class translation factor GTPase superfamily. Classic translation factor GTPase family. EF-Tu/EF-1A subfamily. In terms of assembly, monomer.

The protein resides in the cytoplasm. It catalyses the reaction GTP + H2O = GDP + phosphate + H(+). Functionally, GTP hydrolase that promotes the GTP-dependent binding of aminoacyl-tRNA to the A-site of ribosomes during protein biosynthesis. In Chlamydia caviae (strain ATCC VR-813 / DSM 19441 / 03DC25 / GPIC) (Chlamydophila caviae), this protein is Elongation factor Tu.